Here is an 864-residue protein sequence, read N- to C-terminus: Leucine--tRNA ligase (864 aa).

Residues 42–52 (PYPSGKLHMGH) carry the 'HIGH' region motif. The 'KMSKS' region motif lies at 624-628 (KMSKS). Residue Lys-627 participates in ATP binding.

The protein belongs to the class-I aminoacyl-tRNA synthetase family.

The protein resides in the cytoplasm. It catalyses the reaction tRNA(Leu) + L-leucine + ATP = L-leucyl-tRNA(Leu) + AMP + diphosphate. The chain is Leucine--tRNA ligase from Burkholderia lata (strain ATCC 17760 / DSM 23089 / LMG 22485 / NCIMB 9086 / R18194 / 383).